We begin with the raw amino-acid sequence, 97 residues long: YcgL domain-containing protein Tcr_0238 (97 aa).

In terms of domain architecture, YcgL spans 3-87 (LLVSAYKSAK…SEIEKMGDMP (85 aa)). The segment at 78 to 97 (SEIEKMGDMPPPPEHLDNIF) is disordered.

This chain is YcgL domain-containing protein Tcr_0238, found in Hydrogenovibrio crunogenus (strain DSM 25203 / XCL-2) (Thiomicrospira crunogena).